Consider the following 321-residue polypeptide: Thioredoxin reductase tcpT (321 aa).

Residues 14–17 (GGPA), 36–41 (DSGRYR), His49, and Ala114 contribute to the FAD site. A disulfide bond links Cys138 and Cys141. FAD contacts are provided by residues Asp282 and 289-290 (NV).

Belongs to the class-II pyridine nucleotide-disulfide oxidoreductase family. In terms of assembly, homodimer. The cofactor is FAD.

The protein operates within secondary metabolite biosynthesis. Functionally, thioredoxin reductase; part of the gene cluster that mediates the biosynthesis of an unusual class of epipolythiodioxopiperazines (ETPs) lacking the reactive thiol group important for toxicity. Firstly, L-tyrosine is prenylated by tcpD, before undergoing condensation with L-glycine in a reaction catalyzed by the NRPS tcpP leading to the diketopiperazine (DKP) backbone. Afterwards the alpha-carbon of tyrosine is oxidized by the cytochrome P450 tcpC to form a hydroxyl group. However, in contrast other ETP biosynthesis pathways studied so far, tcpC is not able to bishydroxylate the DKP at both alpha-carbon positions, but hydroxylates the alpha-carbon of the tyrosine part and the nitrogen of the glycine part. The next steps involve an alpha,beta-elimination reaction catalyzed by tcpI, a methylation by the methyltransferase tcpN the action of the four enzyme cascade tcpG/K/J/I. Due to a dysfunctional cytochrome P450 monooxygenase tcpC, the pathway leads to the biosynthesis of probable non-toxic metabolites lacking the reactive thiol group. This Claviceps purpurea (strain 20.1) (Ergot fungus) protein is Thioredoxin reductase tcpT.